The primary structure comprises 99 residues: Putative protein tag-209 (99 aa).

The signal sequence occupies residues 1-16 (MLKLLAFVALLSVSVS).

In Caenorhabditis elegans, this protein is Putative protein tag-209 (tag-209).